The sequence spans 552 residues: Dihydroxy-acid dehydratase (552 aa).

Position 78 (Asp78) interacts with Mg(2+). Residue Cys119 coordinates [2Fe-2S] cluster. Residues Asp120 and Lys121 each contribute to the Mg(2+) site. Lys121 carries the post-translational modification N6-carboxylysine. A [2Fe-2S] cluster-binding site is contributed by Cys191. Glu442 serves as a coordination point for Mg(2+). The active-site Proton acceptor is the Ser468.

The protein belongs to the IlvD/Edd family. Homodimer. [2Fe-2S] cluster is required as a cofactor. Requires Mg(2+) as cofactor.

It catalyses the reaction (2R)-2,3-dihydroxy-3-methylbutanoate = 3-methyl-2-oxobutanoate + H2O. The enzyme catalyses (2R,3R)-2,3-dihydroxy-3-methylpentanoate = (S)-3-methyl-2-oxopentanoate + H2O. It functions in the pathway amino-acid biosynthesis; L-isoleucine biosynthesis; L-isoleucine from 2-oxobutanoate: step 3/4. Its pathway is amino-acid biosynthesis; L-valine biosynthesis; L-valine from pyruvate: step 3/4. In terms of biological role, functions in the biosynthesis of branched-chain amino acids. Catalyzes the dehydration of (2R,3R)-2,3-dihydroxy-3-methylpentanoate (2,3-dihydroxy-3-methylvalerate) into 2-oxo-3-methylpentanoate (2-oxo-3-methylvalerate) and of (2R)-2,3-dihydroxy-3-methylbutanoate (2,3-dihydroxyisovalerate) into 2-oxo-3-methylbutanoate (2-oxoisovalerate), the penultimate precursor to L-isoleucine and L-valine, respectively. The polypeptide is Dihydroxy-acid dehydratase (Clostridium botulinum (strain Alaska E43 / Type E3)).